The chain runs to 433 residues: GTPase Der (433 aa).

EngA-type G domains follow at residues 5-167 (KKVL…GEAN) and 174-349 (IKVG…DQLE). Residues 11–18 (GRPNVGKS), 58–62 (DTGGF), 119–122 (NKVD), 180–187 (GKPNSGKS), 227–231 (DTAGI), and 292–295 (SKWD) each bind GTP. Positions 350–429 (FKTSTPDLNK…PILVELREKI (80 aa)) constitute a KH-like domain.

Belongs to the TRAFAC class TrmE-Era-EngA-EngB-Septin-like GTPase superfamily. EngA (Der) GTPase family. In terms of assembly, associates with the 50S ribosomal subunit.

GTPase that plays an essential role in the late steps of ribosome biogenesis. This is GTPase Der from Borreliella afzelii (strain PKo) (Borrelia afzelii).